A 79-amino-acid chain; its full sequence is uncharacterized protein (79 aa).

Residues 51–79 are disordered; it reads PAQFPKVQRPPTLLGGKNTSTQTTLHPVI. Positions 67–79 are enriched in polar residues; sequence KNTSTQTTLHPVI.

This is an uncharacterized protein from Homo sapiens (Human).